Here is a 33-residue protein sequence, read N- to C-terminus: U-limacoditoxin(13)-As11 (33 aa).

The first 19 residues, 1–19, serve as a signal peptide directing secretion; that stretch reads MFKLLLVLALTMLAQSALA. At Phe32 the chain carries Phenylalanine amide.

It belongs to the FARP (FMRFamide related peptide) family. In terms of tissue distribution, expressed by the venom secretory cell of the spine. The spine is a cuticular structure containing a single large nucleated venom-secreting cell at its base. It is an independent unit capable of producing, storing and injecting venom. On the back of A.stimulea caterpillars, spines are grouped together by 50 to 100 to form scoli, of which there are eight.

The protein resides in the secreted. In terms of biological role, is toxic when injected into Drosophila melanogaster. Also shows a low anthelmintic activity against the parasitic nematode H.contortus (drug susceptible Kirby isolate). The sequence is that of U-limacoditoxin(13)-As11 from Acharia stimulea (Saddleback caterpillar moth).